The chain runs to 369 residues: Secondary metabolism regulator laeA (369 aa).

A disordered region spans residues 1–37 (MFGNGQTGQRLPAMASPPHDSYYSQSLASSRSRNNSD). A compositionally biased stretch (low complexity) spans 20–37 (DSYYSQSLASSRSRNNSD).

The protein belongs to the methyltransferase superfamily. LaeA methyltransferase family. Component of the heterotrimeric velvet complex composed of laeA, veA and velB; VeA acting as a bridging protein between laeA and velB. Interacts directly with veA.

Its subcellular location is the nucleus. The catalysed reaction is L-methionyl-[protein] + S-adenosyl-L-methionine = S-methyl-L-methionyl-[protein] + S-adenosyl-L-homocysteine. Methyltransferase that performs automethylation. No other methyl-accepting substrate has been identified yet. Component of the velvet transcription factor complex that acts as a global regulator for secondary metabolite gene expression. Required for aflR expression and subsequent aflatoxin production. Negatively regulates veA expression. Controls conidiophore and conidial development. Required for hydrophobin production which plays a role in cell surface hydrophobicity and host defense escape. This chain is Secondary metabolism regulator laeA, found in Aspergillus flavus (strain ATCC 200026 / FGSC A1120 / IAM 13836 / NRRL 3357 / JCM 12722 / SRRC 167).